The following is an 85-amino-acid chain: ATP synthase subunit c (85 aa).

Transmembrane regions (helical) follow at residues 22 to 39 (AIGAGLAVIGAGLGIGKI) and 65 to 85 (AALIEGVALLAVVVCLLVFFL).

It belongs to the ATPase C chain family. F-type ATPases have 2 components, F(1) - the catalytic core - and F(0) - the membrane proton channel. F(1) has five subunits: alpha(3), beta(3), gamma(1), delta(1), epsilon(1). F(0) has three main subunits: a(1), b(2) and c(10-14). The alpha and beta chains form an alternating ring which encloses part of the gamma chain. F(1) is attached to F(0) by a central stalk formed by the gamma and epsilon chains, while a peripheral stalk is formed by the delta and b chains.

It is found in the cell inner membrane. Functionally, f(1)F(0) ATP synthase produces ATP from ADP in the presence of a proton or sodium gradient. F-type ATPases consist of two structural domains, F(1) containing the extramembraneous catalytic core and F(0) containing the membrane proton channel, linked together by a central stalk and a peripheral stalk. During catalysis, ATP synthesis in the catalytic domain of F(1) is coupled via a rotary mechanism of the central stalk subunits to proton translocation. In terms of biological role, key component of the F(0) channel; it plays a direct role in translocation across the membrane. A homomeric c-ring of between 10-14 subunits forms the central stalk rotor element with the F(1) delta and epsilon subunits. In Bacteroides thetaiotaomicron (strain ATCC 29148 / DSM 2079 / JCM 5827 / CCUG 10774 / NCTC 10582 / VPI-5482 / E50), this protein is ATP synthase subunit c.